Reading from the N-terminus, the 469-residue chain is Fe(3+)-Zn(2+) purple acid phosphatase 12 (469 aa).

The first 28 residues, 1 to 28 (MSSRSDLKIKRVSLIIFLLSVLVEFCYG), serve as a signal peptide directing secretion. Asn-114 carries N-linked (GlcNAc...) asparagine glycosylation. Asp-168 lines the Fe cation pocket. The N-linked (GlcNAc...) asparagine glycan is linked to Asn-176. Residues Asp-197 and Tyr-200 each contribute to the Fe cation site. Residue Asp-197 participates in Zn(2+) binding. Zn(2+) is bound at residue Asn-234. Substrate is bound at residue Asn-234. A glycan (N-linked (GlcNAc...) asparagine) is linked at Asn-307. His-319 contacts Zn(2+). The active-site Proton donor is His-329. His-356 is a binding site for Zn(2+). 356–358 (HVH) is a substrate binding site. His-358 lines the Fe cation pocket. A glycan (N-linked (GlcNAc...) asparagine) is linked at Asn-429.

It belongs to the metallophosphoesterase superfamily. Purple acid phosphatase family. Homodimer; disulfide-linked. Fe cation serves as cofactor. It depends on Zn(2+) as a cofactor. As to expression, expressed in roots, stems, leaves, flowers and siliques.

It localises to the secreted. The enzyme catalyses a phosphate monoester + H2O = an alcohol + phosphate. This Arabidopsis thaliana (Mouse-ear cress) protein is Fe(3+)-Zn(2+) purple acid phosphatase 12 (PAP12).